Reading from the N-terminus, the 379-residue chain is Succinyl-diaminopimelate desuccinylase (379 aa).

Histidine 70 is a binding site for Zn(2+). The active site involves aspartate 72. Residue aspartate 103 participates in Zn(2+) binding. Residue glutamate 137 is the Proton acceptor of the active site. Residues glutamate 138, glutamate 166, and histidine 352 each coordinate Zn(2+).

The protein belongs to the peptidase M20A family. DapE subfamily. In terms of assembly, homodimer. Zn(2+) is required as a cofactor. Requires Co(2+) as cofactor.

The catalysed reaction is N-succinyl-(2S,6S)-2,6-diaminopimelate + H2O = (2S,6S)-2,6-diaminopimelate + succinate. It functions in the pathway amino-acid biosynthesis; L-lysine biosynthesis via DAP pathway; LL-2,6-diaminopimelate from (S)-tetrahydrodipicolinate (succinylase route): step 3/3. Catalyzes the hydrolysis of N-succinyl-L,L-diaminopimelic acid (SDAP), forming succinate and LL-2,6-diaminopimelate (DAP), an intermediate involved in the bacterial biosynthesis of lysine and meso-diaminopimelic acid, an essential component of bacterial cell walls. This chain is Succinyl-diaminopimelate desuccinylase, found in Burkholderia orbicola (strain MC0-3).